We begin with the raw amino-acid sequence, 610 residues long: UvrABC system protein C (610 aa).

The GIY-YIG domain maps to 16–94 (SQPGVYRMYD…IKLYQPRYNV (79 aa)). Residues 204–239 (DQVLTQLIARMEKASQDLAFEEAARIRDQIQAVRRV) form the UVR domain.

This sequence belongs to the UvrC family. Interacts with UvrB in an incision complex.

The protein localises to the cytoplasm. In terms of biological role, the UvrABC repair system catalyzes the recognition and processing of DNA lesions. UvrC both incises the 5' and 3' sides of the lesion. The N-terminal half is responsible for the 3' incision and the C-terminal half is responsible for the 5' incision. The protein is UvrABC system protein C of Salmonella paratyphi B (strain ATCC BAA-1250 / SPB7).